Reading from the N-terminus, the 698-residue chain is Probable xyloglucan glycosyltransferase 2 (698 aa).

2 helical membrane-spanning segments follow: residues 124-144 (GFLA…WNGW) and 190-210 (ILLF…CFWI). Asp272 is a catalytic residue. 2 residues coordinate substrate: Asp331 and Asp333. The active site involves Asp425. The next 4 helical transmembrane spans lie at 503-523 (LILP…TMFV), 528-548 (LPVW…ILPS), 653-668 (LALS…RSLL), and 673-693 (IHFY…LDLI).

The protein belongs to the glycosyltransferase 2 family. Plant cellulose synthase-like C subfamily.

Its subcellular location is the golgi apparatus membrane. Probable beta-1,4-glucan synthase rather involved in the synthesis of the xyloglucan backbone than cellulose. Seems to work simultaneously with xyloglucan 6-xylosyltransferase. Xyloglucan is a noncellulosic polysaccharides of plant cell wall and consists of a glucan backbone substituted by xylose, galactose and fucose. This chain is Probable xyloglucan glycosyltransferase 2 (CSLC2), found in Oryza sativa subsp. japonica (Rice).